A 269-amino-acid polypeptide reads, in one-letter code: Calretinin (269 aa).

6 consecutive EF-hand domains span residues 14–49 (LSAS…LESA), 61–96 (SLGD…EENF), 105–140 (GSSS…LLKK), 149–184 (KLQE…QENF), 193–228 (LSSE…LYEK), and 230–265 (KKEM…VLCS). D27, D29, N31, Y33, E38, D74, N76, D78, K80, E85, D118, D120, S122, Y124, E129, D162, N164, D166, K168, E173, D206, D208, S210, and E217 together coordinate Ca(2+).

Belongs to the calbindin family.

The protein localises to the synapse. The protein resides in the cell projection. It localises to the dendrite. Functionally, calcium-binding protein involved in calcium homeostasis and signal transduction. It plays a critical role in buffering intracellular calcium levels and modulating calcium-dependent signaling pathways. Predominantly expressed in specific neuronal populations, influences synaptic plasticity and neuronal excitability, contributing to learning and memory. During embryonic development, it facilitates neuronal differentiation and maturation. This Gallus gallus (Chicken) protein is Calretinin (CALB2).